The primary structure comprises 98 residues: Large ribosomal subunit protein uL23 (98 aa).

It belongs to the universal ribosomal protein uL23 family. Part of the 50S ribosomal subunit. Contacts protein L29, and trigger factor when it is bound to the ribosome.

Functionally, one of the early assembly proteins it binds 23S rRNA. One of the proteins that surrounds the polypeptide exit tunnel on the outside of the ribosome. Forms the main docking site for trigger factor binding to the ribosome. The chain is Large ribosomal subunit protein uL23 from Cellvibrio japonicus (strain Ueda107) (Pseudomonas fluorescens subsp. cellulosa).